Reading from the N-terminus, the 57-residue chain is Ribosome modulation factor (57 aa).

Residues 1-28 (MKRQKRDRLERAQSQGYKAGLNGRSHDE) form a disordered region.

This sequence belongs to the ribosome modulation factor family.

The protein localises to the cytoplasm. Its function is as follows. During stationary phase, converts 70S ribosomes to an inactive dimeric form (100S ribosomes). This chain is Ribosome modulation factor, found in Vibrio cholerae serotype O1 (strain MJ-1236).